Consider the following 105-residue polypeptide: Large ribosomal subunit protein uL24 (105 aa).

Residues 1-25 are disordered; the sequence is MHIKKGDNVKVIAGKDKGKEGKVVS.

The protein belongs to the universal ribosomal protein uL24 family. Part of the 50S ribosomal subunit.

Functionally, one of two assembly initiator proteins, it binds directly to the 5'-end of the 23S rRNA, where it nucleates assembly of the 50S subunit. In terms of biological role, one of the proteins that surrounds the polypeptide exit tunnel on the outside of the subunit. This is Large ribosomal subunit protein uL24 from Staphylococcus saprophyticus subsp. saprophyticus (strain ATCC 15305 / DSM 20229 / NCIMB 8711 / NCTC 7292 / S-41).